The chain runs to 231 residues: 2-C-methyl-D-erythritol 4-phosphate cytidylyltransferase (231 aa).

The protein belongs to the IspD/TarI cytidylyltransferase family. IspD subfamily.

It catalyses the reaction 2-C-methyl-D-erythritol 4-phosphate + CTP + H(+) = 4-CDP-2-C-methyl-D-erythritol + diphosphate. Its pathway is isoprenoid biosynthesis; isopentenyl diphosphate biosynthesis via DXP pathway; isopentenyl diphosphate from 1-deoxy-D-xylulose 5-phosphate: step 2/6. Its function is as follows. Catalyzes the formation of 4-diphosphocytidyl-2-C-methyl-D-erythritol from CTP and 2-C-methyl-D-erythritol 4-phosphate (MEP). The chain is 2-C-methyl-D-erythritol 4-phosphate cytidylyltransferase from Rubrobacter xylanophilus (strain DSM 9941 / JCM 11954 / NBRC 16129 / PRD-1).